The sequence spans 485 residues: Cyclic GMP-AMP synthase-like receptor (485 aa).

ATP contacts are provided by residues serine 70 and 82–84 (EYD). Residues glutamate 82, aspartate 84, and aspartate 204 each coordinate Mg(2+). Residues aspartate 204 and 247 to 254 (RLSFYEQE) contribute to the GTP site. Positions 271 and 274 each coordinate ATP. Residues isoleucine 298 and aspartate 304 each contribute to the Mn(2+) site.

This sequence belongs to the mab-21 family. Mg(2+) serves as cofactor. Requires Mn(2+) as cofactor.

The enzyme catalyses GTP + ATP = 2',3'-cGAMP + 2 diphosphate. It catalyses the reaction GTP + ATP = pppGp(2'-5')A + diphosphate. The catalysed reaction is pppGp(2'-5')A = 2',3'-cGAMP + diphosphate. Nucleotidyltransferase that catalyzes the formation of cyclic GMP-AMP (2',3'-cGAMP) from ATP and GTP and plays a key role in innate immunity. Directly binds some unknown ligand, activating the nucleotidyltransferase activity, leading to synthesis of 2',3'-cGAMP, a second messenger that binds to and activates Sting, thereby triggering the immune response via activation of the NF-kappa-B transcription factor. The sequence is that of Cyclic GMP-AMP synthase-like receptor from Trichogramma pretiosum (Parasitoid wasp).